Here is a 133-residue protein sequence, read N- to C-terminus: Interferon alpha-inducible protein 27-like protein 2 (133 aa).

A run of 3 helical transmembrane segments spans residues 8–28 (AAIG…AVGF), 51–71 (GGGV…AAGL), and 73–93 (TSSN…LGGA). The interval 93–133 (AKRASPSPPPGGPRPEGEQPGENVPQVEPPKSPLGPEKHEK) is disordered.

It belongs to the IFI6/IFI27 family.

The protein resides in the mitochondrion membrane. Functionally, plays a role in the apoptotic process and has a pro-apoptotic activity. This Bos taurus (Bovine) protein is Interferon alpha-inducible protein 27-like protein 2.